We begin with the raw amino-acid sequence, 316 residues long: tRNA pseudouridine synthase B (316 aa).

Residue D47 is the Nucleophile of the active site.

Belongs to the pseudouridine synthase TruB family. Type 1 subfamily.

It carries out the reaction uridine(55) in tRNA = pseudouridine(55) in tRNA. Responsible for synthesis of pseudouridine from uracil-55 in the psi GC loop of transfer RNAs. The chain is tRNA pseudouridine synthase B from Aliivibrio fischeri (strain MJ11) (Vibrio fischeri).